We begin with the raw amino-acid sequence, 177 residues long: Small ribosomal subunit protein uS13 (177 aa).

Basic residues predominate over residues 132–145 (GVRHKRGQKVRGQR). Residues 132 to 177 (GVRHKRGQKVRGQRTKSTGRTEGTIGVNVEAIKEEQAEDAAAEDDE) form a disordered region. Over residues 167–177 (QAEDAAAEDDE) the composition is skewed to acidic residues.

It belongs to the universal ribosomal protein uS13 family. In terms of assembly, part of the 30S ribosomal subunit. Forms a loose heterodimer with protein S19. Forms two bridges to the 50S subunit in the 70S ribosome.

In terms of biological role, located at the top of the head of the 30S subunit, it contacts several helices of the 16S rRNA. In the 70S ribosome it contacts the 23S rRNA (bridge B1a) and protein L5 of the 50S subunit (bridge B1b), connecting the 2 subunits; these bridges are implicated in subunit movement. This is Small ribosomal subunit protein uS13 from Haloarcula marismortui (strain ATCC 43049 / DSM 3752 / JCM 8966 / VKM B-1809) (Halobacterium marismortui).